Reading from the N-terminus, the 343-residue chain is Cytoplasmic tRNA 2-thiolation protein 1 (343 aa).

Belongs to the TtcA family. CTU1/NCS6/ATPBD3 subfamily.

The protein resides in the cytoplasm. Its pathway is tRNA modification; 5-methoxycarbonylmethyl-2-thiouridine-tRNA biosynthesis. In terms of biological role, plays a central role in 2-thiolation of mcm(5)S(2)U at tRNA wobble positions of tRNA(Lys), tRNA(Glu) and tRNA(Gln). Directly binds tRNAs and probably acts by catalyzing adenylation of tRNAs, an intermediate required for 2-thiolation. It is unclear whether it acts as a sulfurtransferase that transfers sulfur from thiocarboxylated URM1 onto the uridine of tRNAs at wobble position. The sequence is that of Cytoplasmic tRNA 2-thiolation protein 1 from Drosophila grimshawi (Hawaiian fruit fly).